The sequence spans 461 residues: Steroidogenic factor 1 (461 aa).

A DNA-binding region (nuclear receptor) is located at residues 10 to 85; it reads DELCPVCGDK…VGMRLEAVRA (76 aa). Residues 13-33 form an NR C4-type zinc finger; sequence CPVCGDKVSGYHYGLLTCESC. An N6-acetyllysine mark is found at K34, K38, and K72. An NR C4-type zinc finger spans residues 49–73; sequence CTESQSCKIDKTQRKRCPFCRFQKC. K119 is covalently cross-linked (Glycyl lysine isopeptide (Lys-Gly) (interchain with G-Cter in SUMO)). The disordered stretch occupies residues 119 to 157; it reads KLETGPPMGVPPPPPPAPDYVLPPSLHGPEPKGLAAGPP. The span at 126-136 shows a compositional bias: pro residues; the sequence is MGVPPPPPPAP. A Glycyl lysine isopeptide (Lys-Gly) (interchain with G-Cter in SUMO) cross-link involves residue K194. S203 is modified (phosphoserine; by CDK7). Positions 222-459 constitute an NR LBD domain; the sequence is NVPELILQLL…NLLIEMLQAK (238 aa). The tract at residues 230–461 is important for dimerization; it reads LLQLEPDEDQ…LIEMLQAKQT (232 aa). Positions 341, 436, and 440 each coordinate a 1,2-diacyl-sn-glycero-3-phosphocholine. A 1,2-diacylglycero-3-phosphoethanolamine-binding residues include G341, Y436, and K440.

It belongs to the nuclear hormone receptor family. NR5 subfamily. As to quaternary structure, binds DNA as a monomer. Interacts with NR0B2 and PPARGC1A. Part of a complex consisting of SFPQ, NONO and NR5A1. Interacts with NCOA2. Interacts with DGKQ and CDK7. Binds to and activated by HIPK3. In terms of processing, acetylation stimulates the transcriptional activity. Sumoylation reduces CDK7-mediated phosphorylation on Ser-203. Post-translationally, phosphorylated on Ser-203 by CDK7. This phosphorylation promotes transcriptional activity. In terms of tissue distribution, high expressed in the adrenal cortex, the ovary, the testis, and the spleen.

It localises to the nucleus. In terms of biological role, transcriptional activator. Essential for sexual differentiation and formation of the primary steroidogenic tissues. Binds to the Ad4 site found in the promoter region of steroidogenic P450 genes such as CYP11A, CYP11B and CYP21B. Also regulates the AMH/Muellerian inhibiting substance gene as well as the AHCH and STAR genes. 5'-YCAAGGYC-3' and 5'-RRAGGTCA-3' are the consensus sequences for the recognition by NR5A1. The SFPQ-NONO-NR5A1 complex binds to the CYP17 promoter and regulates basal and cAMP-dependent transcriptional activity. Binds phosphatidylcholine. Binds phospholipids with a phosphatidylinositol (PI) headgroup, in particular PI(3,4)P2 and PI(3,4,5)P3. Activated by the phosphorylation of NR5A1 by HIPK3 leading to increased steroidogenic gene expression upon cAMP signaling pathway stimulation. This Homo sapiens (Human) protein is Steroidogenic factor 1 (NR5A1).